Here is a 106-residue protein sequence, read N- to C-terminus: ARAVRRRRARSRSRSRKSRSRSRSAKRSASRRRSRSAGRRRRRRTASRRRRRSASRRRSVSRRRRRRSRKSRGRRRRGRKVRRRRVKRAGRKGRRRTRRRRRRARR.

The tract at residues 1–106 (ARAVRRRRAR…TRRRRRRARR (106 aa)) is disordered.

As to expression, sperm.

The protein resides in the nucleus. It is found in the chromosome. In Phorcus turbinatus (Sea snail), this protein is Protamine.